Here is a 479-residue protein sequence, read N- to C-terminus: Cardiolipin synthase A (479 aa).

2 consecutive transmembrane segments (helical) span residues 8-28 and 38-58; these read IFGY…IHAV and IAWA…YLVF. PLD phosphodiesterase domains are found at residues 218–245 and 392–419; these read VNFR…GDEY and QPGF…DNRS. Catalysis depends on residues H223, K225, D230, H397, K399, and D404.

It belongs to the phospholipase D family. Cardiolipin synthase subfamily. ClsA sub-subfamily.

Its subcellular location is the cell inner membrane. It catalyses the reaction 2 a 1,2-diacyl-sn-glycero-3-phospho-(1'-sn-glycerol) = a cardiolipin + glycerol. Functionally, catalyzes the reversible phosphatidyl group transfer from one phosphatidylglycerol molecule to another to form cardiolipin (CL) (diphosphatidylglycerol) and glycerol. This Pseudomonas fluorescens (strain ATCC BAA-477 / NRRL B-23932 / Pf-5) protein is Cardiolipin synthase A.